Here is a 218-residue protein sequence, read N- to C-terminus: Glutathione S-transferase Mu 2 (218 aa).

A GST N-terminal domain is found at P2–G88. Residue Y7–W8 participates in glutathione binding. 2 positions are modified to phosphoserine: S27 and S44. Residues R43–W46, K50, N59–L60, and Q72–S73 each bind glutathione. Residues T90 to F214 enclose the GST C-terminal domain. Y116 contributes to the substrate binding site. Phosphoserine is present on S117.

This sequence belongs to the GST superfamily. Mu family. In terms of assembly, homodimer or heterodimer.

The protein localises to the cytoplasm. It catalyses the reaction RX + glutathione = an S-substituted glutathione + a halide anion + H(+). It carries out the reaction 11(S)-hydroxy-14(S),15(S)-epoxy-(5Z,8Z,12E)-eicosatrienoate + glutathione = (11S,15S)-dihydroxy-14(R)-S-glutathionyl-(5Z,8Z,12E)-eicosatrienoate. Conjugation of reduced glutathione to a wide number of exogenous and endogenous hydrophobic electrophiles. Participates in the formation of novel hepoxilin regioisomers. This is Glutathione S-transferase Mu 2 from Rattus norvegicus (Rat).